A 370-amino-acid chain; its full sequence is UPF0284 protein PCC7424_2681 (370 aa).

This sequence belongs to the UPF0284 family.

This is UPF0284 protein PCC7424_2681 from Gloeothece citriformis (strain PCC 7424) (Cyanothece sp. (strain PCC 7424)).